The following is a 512-amino-acid chain: Monocarboxylate transporter 10 (512 aa).

The segment at 1–44 (MVPSQEEPAAERETNEAQPPGPAPSDDAPLPGPGPSDVSDVAAE) is disordered. Topologically, residues 1 to 63 (MVPSQEEPAA…AGSEPPVPPE (63 aa)) are cytoplasmic. Residues 64 to 84 (GGWGWLVMLAAMWCNGSVFGI) form a helical membrane-spanning segment. The Extracellular segment spans residues 85 to 111 (QNAYGVLFVSMLDTFKAKDDDNMAFKT). The chain crosses the membrane as a helical span at residues 112–132 (AWVGSLSMGMIFFCCPIVSVF). The Cytoplasmic portion of the chain corresponds to 133 to 141 (TDMFGCRRT). A helical transmembrane segment spans residues 142-162 (AVVGAAVGFIGLMSSSFVSSI). Over 163–168 (EPLYLT) the chain is Extracellular. Residues 169 to 189 (YGIIFACGCSFAYQPSLVILG) form a helical membrane-spanning segment. Topologically, residues 190–201 (HYFKKRLGLVNG) are cytoplasmic. Residues 202–222 (IVTAGSSVFTILLPLLLGNLI) traverse the membrane as a helical segment. The Extracellular segment spans residues 223-232 (SSVKLFNTLR). A helical transmembrane segment spans residues 233–253 (ILCIFMFVLFLAGFTYRPLVP). Topologically, residues 254 to 291 (STKEKESGGSRSSFFSRRKLSPPKKVFNFALFKETTYA) are cytoplasmic. Ser-260 carries the post-translational modification Phosphoserine. A helical transmembrane segment spans residues 292–312 (VWAAGIPLALFGYFVPYVHLM). Residues 313–326 (NHVKERFQDVNNKE) lie on the Extracellular side of the membrane. A helical transmembrane segment spans residues 327–347 (VLFMCIGITSGVGRLLFGRIA). Residues 348–362 (DYLPGVKKVYLQVLS) are Cytoplasmic-facing. The helical transmembrane segment at 363 to 383 (FFFIGLMSMMIPLCSAFGALI) threads the bilayer. Residue Ala-384 is a topological domain, extracellular. Residues 385-405 (VCLAMGLFDGCFISIMAPIAF) form a helical membrane-spanning segment. The Cytoplasmic portion of the chain corresponds to 406-416 (ELVGPQDASQA). The chain crosses the membrane as a helical span at residues 417-437 (IGFLLGFMSIPMTVGPPIAGL). Over 438–448 (LHDKLGTYDVA) the chain is Extracellular. A helical membrane pass occupies residues 449–469 (FYLAGIPPFVGGVVLCLIPWI). The Cytoplasmic portion of the chain corresponds to 470-512 (HSKKQRKISKNAGGEKMEKMLENQSSLLSGSSGIFKKDSASII). Residues Ser-495, Ser-498, Ser-500, and Ser-501 each carry the phosphoserine modification.

Belongs to the major facilitator superfamily. Monocarboxylate porter (TC 2.A.1.13) family. Not N-glycosylated. As to expression, highly expressed in small intestine, particularly in jejunum and ileum, scarcely in colon and substantially in kidney, liver and skeletal muscle. In the brain expression is low and appears to be restricted to a subset of neurons, microglia cells, and oligodendrocytes.

It localises to the cell membrane. The protein resides in the basolateral cell membrane. It carries out the reaction L-tryptophan(in) = L-tryptophan(out). It catalyses the reaction L-tyrosine(in) = L-tyrosine(out). The catalysed reaction is L-phenylalanine(in) = L-phenylalanine(out). The enzyme catalyses 3,3',5-triiodo-L-thyronine(out) = 3,3',5-triiodo-L-thyronine(in). It carries out the reaction L-thyroxine(out) = L-thyroxine(in). Sodium- and proton-independent thyroid hormones and aromatic acids transporter. Mediates both uptake and efflux of 3,5,3'-triiodothyronine (T3) and 3,5,3',5'-tetraiodothyronine (T4) with high affinity, suggesting a role in the homeostasis of thyroid hormone levels. Responsible for low affinity bidirectional transport of the aromatic amino acids, such as phenylalanine, tyrosine, tryptophan and L-3,4-dihydroxyphenylalanine (L-dopa). Plays an important role in homeostasis of aromatic amino acids. The sequence is that of Monocarboxylate transporter 10 (Slc16a10) from Mus musculus (Mouse).